Here is a 137-residue protein sequence, read N- to C-terminus: Actin-depolymerizing factor 2 (137 aa).

Residues 5–137 (ASGMAVHDDC…GLDVFKSRTN (133 aa)) form the ADF-H domain. Position 6 is a phosphoserine (S6).

It belongs to the actin-binding proteins ADF family. Interacts with AIP1-1.

Its subcellular location is the cytoplasm. The protein resides in the cytoskeleton. Actin-depolymerizing protein. Severs actin filaments (F-actin) and binds to actin monomers. Required for normal cell growth, plant development, cell organ expansion and flowering. Essential for root-knot nematode infection. This is Actin-depolymerizing factor 2 (ADF2) from Arabidopsis thaliana (Mouse-ear cress).